A 934-amino-acid chain; its full sequence is Bifunctional uridylyltransferase/uridylyl-removing enzyme (934 aa).

Residues Met-1–Ser-379 form a uridylyltransferase region. The uridylyl-removing stretch occupies residues Asp-380 to Thr-736. Residues Val-496–Met-613 form the HD domain. ACT domains are found at residues Glu-737–Ala-818 and Val-848–Gln-931.

It belongs to the GlnD family. It depends on Mg(2+) as a cofactor.

It carries out the reaction [protein-PII]-L-tyrosine + UTP = [protein-PII]-uridylyl-L-tyrosine + diphosphate. The enzyme catalyses [protein-PII]-uridylyl-L-tyrosine + H2O = [protein-PII]-L-tyrosine + UMP + H(+). Its activity is regulated as follows. Uridylyltransferase (UTase) activity is inhibited by glutamine, while glutamine activates uridylyl-removing (UR) activity. Modifies, by uridylylation and deuridylylation, the PII regulatory proteins (GlnB and homologs), in response to the nitrogen status of the cell that GlnD senses through the glutamine level. Under low glutamine levels, catalyzes the conversion of the PII proteins and UTP to PII-UMP and PPi, while under higher glutamine levels, GlnD hydrolyzes PII-UMP to PII and UMP (deuridylylation). Thus, controls uridylylation state and activity of the PII proteins, and plays an important role in the regulation of nitrogen assimilation and metabolism. The sequence is that of Bifunctional uridylyltransferase/uridylyl-removing enzyme from Brucella suis (strain ATCC 23445 / NCTC 10510).